Reading from the N-terminus, the 608-residue chain is Granule-bound starch synthase 1, chloroplastic/amyloplastic (608 aa).

The transit peptide at 1-78 (MATVIAAHFV…NGRPAAKIIC (78 aa)) directs the protein to the chloroplast. Lys-96 contributes to the ADP-alpha-D-glucose binding site. Residues 587–608 (GSEPGTEGEEIAPLAKENVPTP) are disordered.

Belongs to the glycosyltransferase 1 family. Bacterial/plant glycogen synthase subfamily. Synthesized in a number of different organs, but most abundantly in tubers.

The protein resides in the plastid. The protein localises to the chloroplast. It is found in the amyloplast. The catalysed reaction is an NDP-alpha-D-glucose + [(1-&gt;4)-alpha-D-glucosyl](n) = [(1-&gt;4)-alpha-D-glucosyl](n+1) + a ribonucleoside 5'-diphosphate + H(+). The protein operates within glycan biosynthesis; starch biosynthesis. Its function is as follows. Responsible for the synthesis of amylose in reserve starch. This Manihot esculenta (Cassava) protein is Granule-bound starch synthase 1, chloroplastic/amyloplastic (WAXY).